The primary structure comprises 1579 residues: MAP kinase kinase kinase SSK2 (1579 aa).

The segment at 1–70 (MSHSDYFNYK…HSTQYFRSPN (70 aa)) is disordered. Positions 21–44 (SSKMRQSSSSSSSRLRSESLGRNS) are enriched in low complexity. Over residues 45–67 (NTTQARVASSPISPGLHSTQYFR) the composition is skewed to polar residues. Residues Ser57, Ser62, Ser78, and Ser118 each carry the phosphoserine modification. Disordered regions lie at residues 97 to 155 (FFHQ…ESEI) and 190 to 243 (SIMS…GSTT). Positions 104–118 (SGSSSSSARSSRRPS) are enriched in low complexity. The segment covering 127–139 (NPQQSLPKLSTQP) has biased composition (polar residues). Positions 144-155 (KKVEASKTESEI) are enriched in basic and acidic residues. Ser290 is modified (phosphoserine). In terms of domain architecture, Protein kinase spans 1266 to 1558 (WQKRNFIGGG…AVELLMDPWI (293 aa)). ATP-binding positions include 1272–1280 (IGGGTFGRV) and Lys1295. Asp1390 functions as the Proton acceptor in the catalytic mechanism. Ser1424 bears the Phosphoserine mark.

This sequence belongs to the protein kinase superfamily. STE Ser/Thr protein kinase family. MAP kinase kinase kinase subfamily. As to quaternary structure, interacts with by SSK1.

The catalysed reaction is L-seryl-[protein] + ATP = O-phospho-L-seryl-[protein] + ADP + H(+). It catalyses the reaction L-threonyl-[protein] + ATP = O-phospho-L-threonyl-[protein] + ADP + H(+). Its function is as follows. Kinase involved in a signal transduction pathway that is activated by changes in the osmolarity of the extracellular environment. Activates the PBS2 MAP kinase kinase by phosphorylation. This is MAP kinase kinase kinase SSK2 (SSK2) from Saccharomyces cerevisiae (strain ATCC 204508 / S288c) (Baker's yeast).